A 283-amino-acid polypeptide reads, in one-letter code: uncharacterized protein (283 aa).

6 helical membrane passes run 28 to 48 (LSST…ILLI), 65 to 85 (LTSL…GFIL), 113 to 133 (LKRG…FMIV), 135 to 155 (ILFI…IVFI), 200 to 220 (LNYI…NFVV), and 246 to 266 (IVDV…AVFA).

It to M.jannaschii MJ0233.

It is found in the cell membrane. This is an uncharacterized protein from Methanocaldococcus jannaschii (strain ATCC 43067 / DSM 2661 / JAL-1 / JCM 10045 / NBRC 100440) (Methanococcus jannaschii).